A 120-amino-acid polypeptide reads, in one-letter code: NAD(P)H-quinone oxidoreductase subunit 3, chloroplastic (120 aa).

3 consecutive transmembrane segments (helical) span residues 9–29, 64–84, and 88–108; these read IFWAFLIISSAIPVLAFLISG, MFALVFVVFDVETVFLYPWAM, and VLGVSAFIEAFIFVLILILGL.

It belongs to the complex I subunit 3 family. In terms of assembly, NDH is composed of at least 16 different subunits, 5 of which are encoded in the nucleus.

It is found in the plastid. The protein localises to the chloroplast thylakoid membrane. It catalyses the reaction a plastoquinone + NADH + (n+1) H(+)(in) = a plastoquinol + NAD(+) + n H(+)(out). It carries out the reaction a plastoquinone + NADPH + (n+1) H(+)(in) = a plastoquinol + NADP(+) + n H(+)(out). Functionally, NDH shuttles electrons from NAD(P)H:plastoquinone, via FMN and iron-sulfur (Fe-S) centers, to quinones in the photosynthetic chain and possibly in a chloroplast respiratory chain. The immediate electron acceptor for the enzyme in this species is believed to be plastoquinone. Couples the redox reaction to proton translocation, and thus conserves the redox energy in a proton gradient. This is NAD(P)H-quinone oxidoreductase subunit 3, chloroplastic from Lobularia maritima (Sweet alyssum).